The following is a 423-amino-acid chain: Histidine--tRNA ligase 2 (423 aa).

The protein belongs to the class-II aminoacyl-tRNA synthetase family. In terms of assembly, homodimer.

It is found in the cytoplasm. The catalysed reaction is tRNA(His) + L-histidine + ATP = L-histidyl-tRNA(His) + AMP + diphosphate + H(+). In Bacillus cereus (strain ATCC 10987 / NRS 248), this protein is Histidine--tRNA ligase 2.